We begin with the raw amino-acid sequence, 199 residues long: Early nodulin-like protein 3 (199 aa).

Residues 1–23 (MGLVMRFDLYLMFVMLMGLGFTI) form the signal peptide. Positions 27–128 (YKFYVGGKDG…GQKLAVKVLS (102 aa)) constitute a Phytocyanin domain. 2 N-linked (GlcNAc...) asparagine glycosylation sites follow: N57 and N83. A disulfide bridge links C82 with C116. Residues 130-180 (VHHSHSPRHTSPSPSPVHQELSSPGPSPGVEPSSDSNSRVPAPGPATAPNS) form a disordered region. Positions 138 to 165 (HTSPSPSPVHQELSSPGPSPGVEPSSDS) are enriched in low complexity. Residue N179 is the site of GPI-anchor amidated asparagine attachment. Positions 180-199 (SAGLVGPGMVVLVIMISSLF) are cleaved as a propeptide — removed in mature form.

It belongs to the early nodulin-like (ENODL) family. As to expression, confined to flowers.

The protein localises to the cell membrane. In terms of biological role, may act as a carbohydrate transporter. This is Early nodulin-like protein 3 from Arabidopsis thaliana (Mouse-ear cress).